The sequence spans 390 residues: tRNA(Met) cytidine acetate ligase (390 aa).

ATP contacts are provided by residues 7–20, Gly-101, Asn-162, and Arg-187; that span reads VVEY…HKLH.

This sequence belongs to the TmcAL family.

The protein localises to the cytoplasm. It catalyses the reaction cytidine(34) in elongator tRNA(Met) + acetate + ATP = N(4)-acetylcytidine(34) in elongator tRNA(Met) + AMP + diphosphate. Its function is as follows. Catalyzes the formation of N(4)-acetylcytidine (ac(4)C) at the wobble position of elongator tRNA(Met), using acetate and ATP as substrates. First activates an acetate ion to form acetyladenylate (Ac-AMP) and then transfers the acetyl group to tRNA to form ac(4)C34. In Listeria monocytogenes serotype 4a (strain HCC23), this protein is tRNA(Met) cytidine acetate ligase.